Here is a 316-residue protein sequence, read N- to C-terminus: GTP cyclohydrolase FolE2 1 (316 aa).

This sequence belongs to the GTP cyclohydrolase IV family.

It carries out the reaction GTP + H2O = 7,8-dihydroneopterin 3'-triphosphate + formate + H(+). Its pathway is cofactor biosynthesis; 7,8-dihydroneopterin triphosphate biosynthesis; 7,8-dihydroneopterin triphosphate from GTP: step 1/1. Functionally, converts GTP to 7,8-dihydroneopterin triphosphate. The protein is GTP cyclohydrolase FolE2 1 of Burkholderia orbicola (strain AU 1054).